The sequence spans 270 residues: tRNA (guanine-N(1)-)-methyltransferase (270 aa).

Residues G119 and 139–144 (IGDYVI) contribute to the S-adenosyl-L-methionine site.

It belongs to the RNA methyltransferase TrmD family. Homodimer.

It localises to the cytoplasm. The catalysed reaction is guanosine(37) in tRNA + S-adenosyl-L-methionine = N(1)-methylguanosine(37) in tRNA + S-adenosyl-L-homocysteine + H(+). Its function is as follows. Specifically methylates guanosine-37 in various tRNAs. The chain is tRNA (guanine-N(1)-)-methyltransferase from Nitrosomonas europaea (strain ATCC 19718 / CIP 103999 / KCTC 2705 / NBRC 14298).